Consider the following 132-residue polypeptide: Small ribosomal subunit protein eS24 (132 aa).

The segment at Leu-91–Asn-132 is disordered. A compositionally biased stretch (basic and acidic residues) spans Leu-96–Asn-112.

Belongs to the eukaryotic ribosomal protein eS24 family. Component of the small ribosomal subunit.

It is found in the cytoplasm. Functionally, component of the small ribosomal subunit. The ribosome is a large ribonucleoprotein complex responsible for the synthesis of proteins in the cell. Required for processing of pre-rRNA and maturation of 40S ribosomal subunits. The polypeptide is Small ribosomal subunit protein eS24 (rps24) (Oryzias latipes (Japanese rice fish)).